A 335-amino-acid polypeptide reads, in one-letter code: Fructose-1,6-bisphosphatase class 1 (335 aa).

Mg(2+)-binding residues include E89, D112, L114, and D115. Residues 115–118, N208, Y241, and K271 contribute to the substrate site; that span reads DGSS. Position 277 (E277) interacts with Mg(2+).

This sequence belongs to the FBPase class 1 family. In terms of assembly, homotetramer. Mg(2+) is required as a cofactor.

It localises to the cytoplasm. The catalysed reaction is beta-D-fructose 1,6-bisphosphate + H2O = beta-D-fructose 6-phosphate + phosphate. It functions in the pathway carbohydrate biosynthesis; gluconeogenesis. This is Fructose-1,6-bisphosphatase class 1 from Proteus mirabilis (strain HI4320).